A 658-amino-acid polypeptide reads, in one-letter code: Transcription factor E2-alpha (658 aa).

Disordered regions lie at residues serine 42 to tyrosine 82, serine 140 to asparagine 191, asparagine 276 to threonine 313, aspartate 331 to glycine 372, valine 460 to valine 558, and glutamate 628 to methionine 658. The Nuclear localization signal motif lies at proline 173 to valine 179. Residues asparagine 276 to aspartate 303 show a composition bias toward polar residues. Over residues serine 333–proline 344 the composition is skewed to low complexity. Over residues valine 345–glycine 355 the composition is skewed to polar residues. Over residues proline 493–serine 507 the composition is skewed to basic and acidic residues. A compositionally biased stretch (acidic residues) spans glutamine 533–leucine 544. The segment covering glutamine 548 to valine 558 has biased composition (basic and acidic residues). In terms of domain architecture, bHLH spans glutamate 555–leucine 608.

In terms of assembly, homodimer. Heterodimer; efficient DNA binding requires dimerization with another bHLH protein. Interacts with tgfb1i1.

The protein resides in the nucleus. In terms of biological role, transcriptional regulator involved in the initiation of neuronal differentiation and mesenchymal to epithelial transition. Heterodimers between tcf3 and tissue-specific basic helix-loop-helix (bHLH) proteins play major roles in determining tissue-specific cell fate during embryogenesis, like muscle or early B-cell differentiation. Together with tcf15, required for the mesenchymal to epithelial transition. Dimers bind DNA on E-box motifs: 5'-CANNTG-3'. The protein is Transcription factor E2-alpha (tcf3) of Xenopus laevis (African clawed frog).